A 579-amino-acid polypeptide reads, in one-letter code: Pre-mRNA-processing protein 45 (579 aa).

Disordered regions lie at residues 1–64 (MTSV…GWRP), 218–254 (QQDP…LTAE), 343–414 (QKAR…TERR), and 521–579 (AAEA…VDDD). Pro residues predominate over residues 234 to 245 (RGPPSPPPPIMH). The span at 343–359 (QKAREERAASNRRDSRA) shows a compositional bias: basic and acidic residues. The segment covering 366-379 (ASRSPSAYSRSATP) has biased composition (low complexity). Composition is skewed to basic and acidic residues over residues 386 to 414 (ARER…TERR), 521 to 538 (AAEA…KDTT), and 563 to 579 (EVER…VDDD).

Belongs to the SNW family. As to quaternary structure, associated with the spliceosome.

It localises to the nucleus. Functionally, involved in pre-mRNA splicing. This chain is Pre-mRNA-processing protein 45 (prp45), found in Aspergillus fumigatus (strain ATCC MYA-4609 / CBS 101355 / FGSC A1100 / Af293) (Neosartorya fumigata).